The sequence spans 431 residues: Tol-Pal system protein TolB (431 aa).

Positions 1-24 (MMKFLTRMLSAFAVLFFAISTAQA) are cleaved as a signal peptide. Positions 318–340 (QVYRMSSSGGAASPVGGRGSAQI) are disordered. Positions 323 to 332 (SSSGGAASPV) are enriched in low complexity.

The protein belongs to the TolB family. The Tol-Pal system is composed of five core proteins: the inner membrane proteins TolA, TolQ and TolR, the periplasmic protein TolB and the outer membrane protein Pal. They form a network linking the inner and outer membranes and the peptidoglycan layer.

It localises to the periplasm. Part of the Tol-Pal system, which plays a role in outer membrane invagination during cell division and is important for maintaining outer membrane integrity. This Mannheimia succiniciproducens (strain KCTC 0769BP / MBEL55E) protein is Tol-Pal system protein TolB.